We begin with the raw amino-acid sequence, 364 residues long: MAQELMFEEPRRGKPPRHLADFDAEGRASAVAALGLPPFRAKQLAHQYYGRLIADPRQMTDLPAAVREQIAETMFPNLLTAAREVTCDAGQTRKTLWRATDGVTLESVLMRYPQRNTVCISSQAGCGMACPFCATGQGGLTRNLSTAEILEQVRAAAAALRDEFGDRLSNVVFMGMGEPLANYARVLAAVRRITEPPPMGFGISARSVTVSTVGLAPAIRKLADERLGVTLALSLHAPDDELRDTLVPVNNRWKISEALEAAHYYAEVTGRRVSVEYALIREVNDQPWRADLLGKRLHRALGPLVHVNLIPLNPTPGSDWDASPKPVEREFVKRVRAQGVSCTVRDTRGREISAACGQLAAEGG.

Glu-106 (proton acceptor) is an active-site residue. In terms of domain architecture, Radical SAM core spans 112–350 (YPQRNTVCIS…SCTVRDTRGR (239 aa)). Cys-119 and Cys-356 are disulfide-bonded. Residues Cys-126, Cys-130, and Cys-133 each contribute to the [4Fe-4S] cluster site. Residues 177 to 178 (GE), Ser-211, 234 to 236 (SLH), and Asn-313 contribute to the S-adenosyl-L-methionine site. Catalysis depends on Cys-356, which acts as the S-methylcysteine intermediate.

The protein belongs to the radical SAM superfamily. RlmN family. It depends on [4Fe-4S] cluster as a cofactor.

Its subcellular location is the cytoplasm. It carries out the reaction adenosine(2503) in 23S rRNA + 2 reduced [2Fe-2S]-[ferredoxin] + 2 S-adenosyl-L-methionine = 2-methyladenosine(2503) in 23S rRNA + 5'-deoxyadenosine + L-methionine + 2 oxidized [2Fe-2S]-[ferredoxin] + S-adenosyl-L-homocysteine. It catalyses the reaction adenosine(37) in tRNA + 2 reduced [2Fe-2S]-[ferredoxin] + 2 S-adenosyl-L-methionine = 2-methyladenosine(37) in tRNA + 5'-deoxyadenosine + L-methionine + 2 oxidized [2Fe-2S]-[ferredoxin] + S-adenosyl-L-homocysteine. Specifically methylates position 2 of adenine 2503 in 23S rRNA and position 2 of adenine 37 in tRNAs. This Mycobacterium marinum (strain ATCC BAA-535 / M) protein is Probable dual-specificity RNA methyltransferase RlmN.